The chain runs to 371 residues: 4-hydroxy-3-methylbut-2-en-1-yl diphosphate synthase (flavodoxin) (371 aa).

C268, C271, C303, and E310 together coordinate [4Fe-4S] cluster.

It belongs to the IspG family. [4Fe-4S] cluster is required as a cofactor.

It carries out the reaction (2E)-4-hydroxy-3-methylbut-2-enyl diphosphate + oxidized [flavodoxin] + H2O + 2 H(+) = 2-C-methyl-D-erythritol 2,4-cyclic diphosphate + reduced [flavodoxin]. Its pathway is isoprenoid biosynthesis; isopentenyl diphosphate biosynthesis via DXP pathway; isopentenyl diphosphate from 1-deoxy-D-xylulose 5-phosphate: step 5/6. In terms of biological role, converts 2C-methyl-D-erythritol 2,4-cyclodiphosphate (ME-2,4cPP) into 1-hydroxy-2-methyl-2-(E)-butenyl 4-diphosphate. The chain is 4-hydroxy-3-methylbut-2-en-1-yl diphosphate synthase (flavodoxin) from Macrococcus caseolyticus (strain JCSC5402) (Macrococcoides caseolyticum).